The primary structure comprises 316 residues: Arginine transport system permease protein ArgU (316 aa).

The span at 1–14 (MSDLNQGPGASTAQ) shows a compositional bias: polar residues. Residues 1-20 (MSDLNQGPGASTAQPKPIEA) form a disordered region. 6 consecutive transmembrane segments (helical) span residues 29–49 (WVAA…ALNN), 74–94 (IALT…LAVM), 108–128 (LYLW…WGLL), 151–171 (MFLL…AEIV), 217–237 (LISM…LELY), and 251–271 (VPML…LMVG). One can recognise an ABC transmembrane type-1 domain in the interval 70–274 (ALHTIALTLL…TSILMVGQYY (205 aa)).

The protein belongs to the binding-protein-dependent transport system permease family. In terms of assembly, the complex is probably composed of two ATP-binding proteins (ArgV), two transmembrane proteins (ArgU) and a solute-binding protein (ArgT).

It is found in the cell membrane. Part of the ABC transporter complex ArgTUV involved in L-arginine import. May also transport L-citrulline. Probably responsible for the translocation of the substrate across the membrane. This is Arginine transport system permease protein ArgU from Corynebacterium glutamicum (strain ATCC 13032 / DSM 20300 / JCM 1318 / BCRC 11384 / CCUG 27702 / LMG 3730 / NBRC 12168 / NCIMB 10025 / NRRL B-2784 / 534).